The primary structure comprises 351 residues: Photosystem II D2 protein (351 aa).

A helical transmembrane segment spans residues Thr-39–Thr-59. A chlorophyll a-binding site is contributed by His-116. A helical membrane pass occupies residues Gly-123–Pro-139. Pheophytin a contacts are provided by Gln-128 and Asn-141. Residues Ile-151–Ala-164 traverse the membrane as a helical segment. His-196 is a chlorophyll a binding site. The chain crosses the membrane as a helical span at residues Gly-206–Asp-226. A plastoquinone-binding residues include His-213 and Phe-260. Position 213 (His-213) interacts with Fe cation. Position 267 (His-267) interacts with Fe cation. Residues Gly-277–Arg-293 traverse the membrane as a helical segment.

It belongs to the reaction center PufL/M/PsbA/D family. In terms of assembly, PSII is composed of 1 copy each of membrane proteins PsbA, PsbB, PsbC, PsbD, PsbE, PsbF, PsbH, PsbI, PsbJ, PsbK, PsbL, PsbM, PsbT, PsbX, PsbY, PsbZ, Psb30/Ycf12, at least 3 peripheral proteins of the oxygen-evolving complex and a large number of cofactors. It forms dimeric complexes. It depends on The D1/D2 heterodimer binds P680, chlorophylls that are the primary electron donor of PSII, and subsequent electron acceptors. It shares a non-heme iron and each subunit binds pheophytin, quinone, additional chlorophylls, carotenoids and lipids. There is also a Cl(-1) ion associated with D1 and D2, which is required for oxygen evolution. The PSII complex binds additional chlorophylls, carotenoids and specific lipids. as a cofactor.

The protein resides in the plastid. It is found in the chloroplast thylakoid membrane. It carries out the reaction 2 a plastoquinone + 4 hnu + 2 H2O = 2 a plastoquinol + O2. Functionally, photosystem II (PSII) is a light-driven water:plastoquinone oxidoreductase that uses light energy to abstract electrons from H(2)O, generating O(2) and a proton gradient subsequently used for ATP formation. It consists of a core antenna complex that captures photons, and an electron transfer chain that converts photonic excitation into a charge separation. The D1/D2 (PsbA/PsbD) reaction center heterodimer binds P680, the primary electron donor of PSII as well as several subsequent electron acceptors. D2 is needed for assembly of a stable PSII complex. This chain is Photosystem II D2 protein, found in Heterosigma akashiwo (strain NIES-293 / 8280G21-1).